The primary structure comprises 505 residues: MALWRASDNMVYLPPPSVAKVVNTDDYVTRTGMYYYAGTSRLLTVGHPYFKVPMSGGRKQGIPKVSAYQYRVFRVTLPDPNKFSVPESTLYNPDTQRMVWACVGVEIGRGQPLGVGLSGHPLYNRLDDTENSPFSSNKNPKDSRDNVAVDCKQTQLCIIGCVPAIGEHWAKGKSCKPTNVQQGDCPPLELVNTPIEDGDMIDTGYGAMDFGTLQETKSEVPLDICQSVCKYPDYLQMSADVYGDSMFFCLRREQLFARHFWNRGGMVGDTIPTDMYIKGTDIRETPSSYVYAPSPSGSMVSSDSQLFNKPYWLHKAQGHNNGICWHNQLFLTVVDTTRSTNFTLSTTTDSTVPAVYDSNKFKEYVRHVEEYDLQFIFQLCTITLSTDVMSYIHTMNPAILDDWNFGVAPPPSASLVDTYRYLQSAAITCQKDAPAPVKKDPYDGLNFWNVDLKEKFSSELDQFPLGRKFLLQAGVRRRPTIGPRKRTATATTTSTSKHKRKRVSK.

2 disordered regions span residues 126 to 145 and 480 to 505; these read LDDTENSPFSSNKNPKDSRD and TIGPRKRTATATTTSTSKHKRKRVSK. A compositionally biased stretch (basic residues) spans 496–505; the sequence is SKHKRKRVSK.

It belongs to the papillomaviridae L1 protein family. As to quaternary structure, self-assembles into homopentamers. The capsid has an icosahedral symmetry and consists of 72 capsomers, with each capsomer being a pentamer of L1. Interacts with the minor capsid protein L2; this interaction is necessary for viral genome encapsidation. Interacts with protein E2; this interaction enhances E2-dependent replication and transcription activation.

The protein resides in the virion. It is found in the host nucleus. In terms of biological role, forms an icosahedral capsid with a T=7 symmetry and a 50 nm diameter. The capsid is composed of 72 pentamers linked to each other by disulfide bonds and associated with L2 proteins. Binds to heparan sulfate proteoglycans on cell surface of basal layer keratinocytes to provide initial virion attachment. This binding mediates a conformational change in the virus capsid that facilitates efficient infection. The virion enters the host cell via endocytosis. During virus trafficking, L1 protein dissociates from the viral DNA and the genomic DNA is released to the host nucleus. The virion assembly takes place within the cell nucleus. Encapsulates the genomic DNA together with protein L2. This Homo sapiens (Human) protein is Major capsid protein L1.